We begin with the raw amino-acid sequence, 173 residues long: Crossover junction endodeoxyribonuclease RuvC (173 aa).

Active-site residues include Asp-11, Glu-71, and Asp-143. Mg(2+) is bound by residues Asp-11, Glu-71, and Asp-143.

Belongs to the RuvC family. As to quaternary structure, homodimer which binds Holliday junction (HJ) DNA. The HJ becomes 2-fold symmetrical on binding to RuvC with unstacked arms; it has a different conformation from HJ DNA in complex with RuvA. In the full resolvosome a probable DNA-RuvA(4)-RuvB(12)-RuvC(2) complex forms which resolves the HJ. Mg(2+) serves as cofactor.

The protein resides in the cytoplasm. The enzyme catalyses Endonucleolytic cleavage at a junction such as a reciprocal single-stranded crossover between two homologous DNA duplexes (Holliday junction).. Its function is as follows. The RuvA-RuvB-RuvC complex processes Holliday junction (HJ) DNA during genetic recombination and DNA repair. Endonuclease that resolves HJ intermediates. Cleaves cruciform DNA by making single-stranded nicks across the HJ at symmetrical positions within the homologous arms, yielding a 5'-phosphate and a 3'-hydroxyl group; requires a central core of homology in the junction. The consensus cleavage sequence is 5'-(A/T)TT(C/G)-3'. Cleavage occurs on the 3'-side of the TT dinucleotide at the point of strand exchange. HJ branch migration catalyzed by RuvA-RuvB allows RuvC to scan DNA until it finds its consensus sequence, where it cleaves and resolves the cruciform DNA. In Brucella suis (strain ATCC 23445 / NCTC 10510), this protein is Crossover junction endodeoxyribonuclease RuvC.